The sequence spans 409 residues: Outer membrane protein assembly factor BamB (409 aa).

The signal sequence occupies residues 1 to 34 (MAGNILLLILDYVFHAGSRTLRVCILSLLILLSG). Residue Cys35 is the site of N-palmitoyl cysteine attachment. Cys35 carries the S-diacylglycerol cysteine lipid modification.

This sequence belongs to the BamB family. Part of the Bam complex.

It is found in the cell outer membrane. In terms of biological role, part of the outer membrane protein assembly complex, which is involved in assembly and insertion of beta-barrel proteins into the outer membrane. The chain is Outer membrane protein assembly factor BamB from Nitrosomonas eutropha (strain DSM 101675 / C91 / Nm57).